The chain runs to 1040 residues: Chromatin modification-related protein rik1 (1040 aa).

This sequence belongs to the DDB1 family. As to quaternary structure, component of the Clr4 methyltransferase complex (ClrC) composed of at least clr4, rik1, pcu4, rbx1, raf1 and raf2. The cullin pcu4, rik1, raf1, raf2 and the ring-box protein rbx1 are components of an E3 ubiquitin ligase, whose activity is essential for heterochromatin assembly.

The protein localises to the nucleus. It localises to the cytoplasm. It is found in the cytoskeleton. The protein resides in the microtubule organizing center. Its subcellular location is the spindle pole body. The protein localises to the chromosome. Its function is as follows. Component of the Clr4 methyltransferase complex (ClrC) which contributes to the establishment of heterochromatin by specifically methylating histone H3 to form H3K9me. ClrC preferentially ubiquitylates H3K14 and ClrC-mediated H3 ubiquitination promotes clr4 methyltransferase activity for the methylation of H3K9. H3K9me represents a specific tag for epigenetic transcriptional repression by recruiting swi6/HP1 to methylated histones which leads to transcriptional silencing within centromeric heterochromatin, telomeric regions and at the silent mating-type loci. Rik1 is involved in the RNAi-mediated targeting of ClrC to heterochromatic repeat elements. Rik1 also has a function in meiotic telomere clustering. The protein is Chromatin modification-related protein rik1 (rik1) of Schizosaccharomyces pombe (strain 972 / ATCC 24843) (Fission yeast).